The chain runs to 359 residues: DNA replication and repair protein RecF (359 aa).

30–37 lines the ATP pocket; sequence GQNAQGKT.

This sequence belongs to the RecF family.

It localises to the cytoplasm. The RecF protein is involved in DNA metabolism; it is required for DNA replication and normal SOS inducibility. RecF binds preferentially to single-stranded, linear DNA. It also seems to bind ATP. The sequence is that of DNA replication and repair protein RecF from Lactococcus lactis subsp. cremoris (strain MG1363).